The chain runs to 141 residues: Large ribosomal subunit protein uL11 (141 aa).

This sequence belongs to the universal ribosomal protein uL11 family. In terms of assembly, part of the ribosomal stalk of the 50S ribosomal subunit. Interacts with L10 and the large rRNA to form the base of the stalk. L10 forms an elongated spine to which L12 dimers bind in a sequential fashion forming a multimeric L10(L12)X complex. One or more lysine residues are methylated.

Its function is as follows. Forms part of the ribosomal stalk which helps the ribosome interact with GTP-bound translation factors. The polypeptide is Large ribosomal subunit protein uL11 (Gloeothece citriformis (strain PCC 7424) (Cyanothece sp. (strain PCC 7424))).